The following is a 203-amino-acid chain: MIGRLRGTLAEKQPPHLILDVNGLGYELEVPMTTLYRLPSVGEPITLHTHLVVREDAQLLYGFIGKRDRDFFRELIRLNGVGPKLALALMSSLEVDELVRAVSAQDTSALTKVPGVGKKTAERLLVELKDRFKAWEVVPSMFALVPNQPDMPAGQVASAESDAVSALISLGYKPQEASKAVSAIKDKNLSSEDMIRRALKGMI.

The segment at 1–64 (MIGRLRGTLA…EDAQLLYGFI (64 aa)) is domain I. The segment at 65 to 143 (GKRDRDFFRE…AWEVVPSMFA (79 aa)) is domain II. Positions 144–154 (LVPNQPDMPAG) are flexible linker. Positions 155–203 (QVASAESDAVSALISLGYKPQEASKAVSAIKDKNLSSEDMIRRALKGMI) are domain III.

The protein belongs to the RuvA family. Homotetramer. Forms an RuvA(8)-RuvB(12)-Holliday junction (HJ) complex. HJ DNA is sandwiched between 2 RuvA tetramers; dsDNA enters through RuvA and exits via RuvB. An RuvB hexamer assembles on each DNA strand where it exits the tetramer. Each RuvB hexamer is contacted by two RuvA subunits (via domain III) on 2 adjacent RuvB subunits; this complex drives branch migration. In the full resolvosome a probable DNA-RuvA(4)-RuvB(12)-RuvC(2) complex forms which resolves the HJ.

Its subcellular location is the cytoplasm. The RuvA-RuvB-RuvC complex processes Holliday junction (HJ) DNA during genetic recombination and DNA repair, while the RuvA-RuvB complex plays an important role in the rescue of blocked DNA replication forks via replication fork reversal (RFR). RuvA specifically binds to HJ cruciform DNA, conferring on it an open structure. The RuvB hexamer acts as an ATP-dependent pump, pulling dsDNA into and through the RuvAB complex. HJ branch migration allows RuvC to scan DNA until it finds its consensus sequence, where it cleaves and resolves the cruciform DNA. The protein is Holliday junction branch migration complex subunit RuvA of Pseudomonas fluorescens (strain SBW25).